The chain runs to 217 residues: Uracil-DNA glycosylase (217 aa).

Aspartate 62 functions as the Proton acceptor in the catalytic mechanism.

It belongs to the uracil-DNA glycosylase (UDG) superfamily. UNG family.

It is found in the cytoplasm. It carries out the reaction Hydrolyzes single-stranded DNA or mismatched double-stranded DNA and polynucleotides, releasing free uracil.. Excises uracil residues from the DNA which can arise as a result of misincorporation of dUMP residues by DNA polymerase or due to deamination of cytosine. This chain is Uracil-DNA glycosylase, found in Streptococcus equi subsp. equi (strain 4047).